The primary structure comprises 83 residues: Mu-theraphotoxin-Hhn2n (83 aa).

A signal peptide spans 1 to 21; sequence MKASMYLALAGLVLLFVVGYA. Residues 22–48 constitute a propeptide that is removed on maturation; sequence SESEEKEFPRELLSKIFAVDDFKGEER. 3 disulfide bridges follow: C50–C65, C57–C70, and C64–C77. Position 81 is a leucine amide (L81).

This sequence belongs to the neurotoxin 10 (Hwtx-1) family. 15 (Hntx-3) subfamily. In terms of assembly, monomer. As to expression, expressed by the venom gland.

The protein resides in the secreted. Functionally, lethal neurotoxin. Selectively blocks tetrodotoxin-sensitive voltage-gated sodium channels (Nav). Does not affect tetrodotoxin-resistant voltage-gated sodium channels or calcium channels. This is Mu-theraphotoxin-Hhn2n from Cyriopagopus hainanus (Chinese bird spider).